A 458-amino-acid chain; its full sequence is ATP synthase subunit beta 2 (458 aa).

ATP is bound at residue 148 to 155 (GGAGVGKT).

Belongs to the ATPase alpha/beta chains family. F-type ATPases have 2 components, CF(1) - the catalytic core - and CF(0) - the membrane proton channel. CF(1) has five subunits: alpha(3), beta(3), gamma(1), delta(1), epsilon(1). CF(0) has three main subunits: a(1), b(2) and c(9-12). The alpha and beta chains form an alternating ring which encloses part of the gamma chain. CF(1) is attached to CF(0) by a central stalk formed by the gamma and epsilon chains, while a peripheral stalk is formed by the delta and b chains.

The protein localises to the cell inner membrane. The catalysed reaction is ATP + H2O + 4 H(+)(in) = ADP + phosphate + 5 H(+)(out). Produces ATP from ADP in the presence of a proton gradient across the membrane. The catalytic sites are hosted primarily by the beta subunits. In Marinomonas sp. (strain MWYL1), this protein is ATP synthase subunit beta 2.